The sequence spans 166 residues: Large ribosomal subunit protein uL10 (166 aa).

Belongs to the universal ribosomal protein uL10 family. In terms of assembly, part of the ribosomal stalk of the 50S ribosomal subunit. The N-terminus interacts with L11 and the large rRNA to form the base of the stalk. The C-terminus forms an elongated spine to which L12 dimers bind in a sequential fashion forming a multimeric L10(L12)X complex.

In terms of biological role, forms part of the ribosomal stalk, playing a central role in the interaction of the ribosome with GTP-bound translation factors. The chain is Large ribosomal subunit protein uL10 from Pelagibacter ubique (strain HTCC1062).